A 271-amino-acid chain; its full sequence is Centromere protein K (271 aa).

2 coiled-coil regions span residues 11–44 and 102–151; these read DTIT…QNKL and LRCD…VENQ.

It belongs to the CENP-K/MCM22 family. In terms of assembly, component of the CENPA-CAD complex, composed of CENPI, CENPK, CENPL, CENPO, CENPP, CENPQ, CENPR and CENPS. The CENPA-CAD complex interacts with the CENPA-NAC complex, at least composed of CENPA, CENPC, CENPH, CENPM, CENPN, CENPT and CENPU. May interact with Sox6. Highly expressed in testis.

The protein resides in the nucleus. The protein localises to the chromosome. It localises to the centromere. It is found in the kinetochore. In terms of biological role, component of the CENPA-CAD (nucleosome distal) complex, a complex recruited to centromeres which is involved in assembly of kinetochore proteins, mitotic progression and chromosome segregation. May be involved in incorporation of newly synthesized CENPA into centromeres via its interaction with the CENPA-NAC complex. Acts in coordination with KNL1 to recruit the NDC80 complex to the outer kinetochore. The protein is Centromere protein K (Cenpk) of Mus musculus (Mouse).